Reading from the N-terminus, the 473-residue chain is MQKGNVWVVDDDSSIRWVLERAITREGMLCRAFEHANDVLKALNSEQPDVLLSDIRMPDMDGLSLLKIIKEQYPTLPVIIMTAHSDLDAAVNAYQQGAFDYLPKPFDIDETLALIERAITHYREQKQPNNAENILQSVSDMIGEAPAMQEVYRIIGRLSRSSISVLINGESGTGKELVAHALHRHSPRALAPFIALNMAAIPKDLIESELFGHEKGAFTGASQVRQGRFEQANGGSLFLDEIGDMPLDIQTRLLRVLAEGQFYRVGGYAPVKVDVRIIAATHQDLEKRVNEGDFREDLYHRLNVIRIQLPPLRDRTEDIPSLARYFLQKTAKELGVETKSLHEQSLKTMMEYVWSGNVRQLENVCRWLTVMTASQEIMPQDLPSEIRLADEKAKNINRLTSQHWSQHLSLWADEALGEGKENILNDALPQFERTLLLSALAYTQGHKQDAARLLGWGRNTLTRKLKELGIEDY.

The region spanning 5–119 is the Response regulatory domain; the sequence is NVWVVDDDSS…ETLALIERAI (115 aa). D54 bears the 4-aspartylphosphate mark. The Sigma-54 factor interaction domain maps to 141–370; it reads MIGEAPAMQE…LENVCRWLTV (230 aa). Residues 169-176 and 232-241 contribute to the ATP site; these read GESGTGKE and ANGGSLFLDE. The H-T-H motif DNA-binding region spans 447–466; sequence KQDAARLLGWGRNTLTRKLK.

Phosphorylated and dephosphorylated by NtrB.

Its subcellular location is the cytoplasm. Member of the two-component regulatory system NtrB/NtrC, which controls expression of the nitrogen-regulated (ntr) genes in response to nitrogen limitation. Phosphorylated NtrC binds directly to DNA and stimulates the formation of open promoter-sigma54-RNA polymerase complexes. This Proteus hauseri protein is DNA-binding transcriptional regulator NtrC (ntrC).